We begin with the raw amino-acid sequence, 362 residues long: Isopentenyl-diphosphate delta-isomerase (362 aa).

5-6 (RK) contacts substrate. FMN contacts are provided by residues 63-65 (AMT), serine 93, and asparagine 122. Position 152 (glutamine 152) interacts with substrate. A Mg(2+)-binding site is contributed by glutamate 153. Residues lysine 184, threonine 214, 259–261 (GIR), and 280–281 (AG) each bind FMN.

It belongs to the IPP isomerase type 2 family. As to quaternary structure, homooctamer. Dimer of tetramers. The cofactor is FMN. NADPH serves as cofactor. It depends on Mg(2+) as a cofactor.

The protein localises to the cytoplasm. It catalyses the reaction isopentenyl diphosphate = dimethylallyl diphosphate. In terms of biological role, involved in the biosynthesis of isoprenoids. Catalyzes the 1,3-allylic rearrangement of the homoallylic substrate isopentenyl (IPP) to its allylic isomer, dimethylallyl diphosphate (DMAPP). This Nocardia farcinica (strain IFM 10152) protein is Isopentenyl-diphosphate delta-isomerase.